The chain runs to 455 residues: Secreted triacylglycerol lipase LIP4 (455 aa).

The first 19 residues, 1–19 (MKLNLFILGLLTLAAHAYA), serve as a signal peptide directing secretion. An N-linked (GlcNAc...) asparagine glycan is attached at Asn-98. A disulfide bond links Cys-115 and Cys-284. Ser-197 serves as the catalytic Nucleophile. N-linked (GlcNAc...) asparagine glycosylation occurs at Asn-230. Residues Asp-344 and His-378 contribute to the active site. Cysteines 360 and 406 form a disulfide.

This sequence belongs to the AB hydrolase superfamily. Lipase family. Class Lip subfamily.

The protein localises to the secreted. It is found in the cell wall. It catalyses the reaction a triacylglycerol + H2O = a diacylglycerol + a fatty acid + H(+). The catalysed reaction is a monoacylglycerol + H2O = glycerol + a fatty acid + H(+). The enzyme catalyses a diacylglycerol + H2O = a monoacylglycerol + a fatty acid + H(+). Its function is as follows. Secreted lipase involved in Dandruff and seborrheic dermatitis (D/SD) probably via lipase-mediated breakdown of sebaceous lipids and release of irritating free fatty acids. Has triacylglycerol lipase activity and is able to hydrolyze triolein. Mostly converts monoolein to di- and triolein, while free fatty acids are only produced in low amounts. This is Secreted triacylglycerol lipase LIP4 from Malassezia globosa (strain ATCC MYA-4612 / CBS 7966) (Dandruff-associated fungus).